The following is a 272-amino-acid chain: 27-O-demethylrifamycin SV methyltransferase (272 aa).

S-adenosyl-L-methionine-binding positions include Ser-89, Gln-94, 117 to 118, Leu-134, and His-139; that span reads DA.

Belongs to the class I-like SAM-binding methyltransferase superfamily. As to quaternary structure, exists probably as a trimer.

The enzyme catalyses 27-O-demethylrifamycin SV + S-adenosyl-L-methionine = rifamycin SV + S-adenosyl-L-homocysteine + H(+). Its pathway is antibiotic biosynthesis; rifamycin B biosynthesis. Slightly inhibited by Ca(2+) and Mg(2+). Strongly inhibited by Zn(2+), Ni(2+) and Co(2+). Functionally, catalyzes the methylation of 27-O-demethylrifamycin SV (DMRSV) to rifamycin SV. The sequence is that of 27-O-demethylrifamycin SV methyltransferase from Amycolatopsis mediterranei (strain S699) (Nocardia mediterranei).